A 168-amino-acid chain; its full sequence is Transcription antitermination protein NusB (168 aa).

It belongs to the NusB family.

In terms of biological role, involved in transcription antitermination. Required for transcription of ribosomal RNA (rRNA) genes. Binds specifically to the boxA antiterminator sequence of the ribosomal RNA (rrn) operons. The chain is Transcription antitermination protein NusB from Prosthecochloris aestuarii (strain DSM 271 / SK 413).